We begin with the raw amino-acid sequence, 62 residues long: Defensin BmKDfsin6 (62 aa).

A signal peptide spans 1 to 24; that stretch reads MKVIAILFLLAFVLCTMEITMVEA. Intrachain disulfides connect C28/C49, C35/C57, and C39/C59.

This sequence belongs to the invertebrate defensin family. Type 2 subfamily. Highly expressed in non-venom gland (hemolymph) and moderately expressed in venom gland.

Its subcellular location is the secreted. In terms of biological role, antibacterial peptide active against Gram-positive bacteria, but not on Gram-negative bacteria. Also has weak blocking activity on Kv1.1/KCNA1, Kv1.2/KCNA2, Kv1.3/KCNA3, KCa3.1/KCNN4/IK, KCa2.3/KCNN3/SK3 and Kv11.1/KCNH2/ERG1 channels (tested at 1 uM). It inhibits potassium channel current by interacting with the pore region. This chain is Defensin BmKDfsin6, found in Olivierus martensii (Manchurian scorpion).